The chain runs to 428 residues: Cytochrome c biogenesis protein CcsB (428 aa).

3 helical membrane passes run 14-34 (LRFA…GTFI), 72-92 (SFWF…CSFR), and 162-182 (IGPL…AYGS).

The protein belongs to the Ccs1/CcsB family. In terms of assembly, may interact with CcsA.

It is found in the cellular thylakoid membrane. Required during biogenesis of c-type cytochromes (cytochrome c6 and cytochrome f) at the step of heme attachment. In Prochlorococcus marinus (strain AS9601), this protein is Cytochrome c biogenesis protein CcsB.